The chain runs to 239 residues: Uridylate kinase (239 aa).

13-16 (KLSG) contributes to the ATP binding site. UMP is bound at residue Gly-55. Residues Gly-56 and Arg-60 each coordinate ATP. UMP contacts are provided by residues Asp-75 and 136 to 143 (TGNPFFTT). 3 residues coordinate ATP: Thr-163, Tyr-169, and Asp-172.

It belongs to the UMP kinase family. In terms of assembly, homohexamer.

Its subcellular location is the cytoplasm. The catalysed reaction is UMP + ATP = UDP + ADP. It functions in the pathway pyrimidine metabolism; CTP biosynthesis via de novo pathway; UDP from UMP (UMPK route): step 1/1. With respect to regulation, inhibited by UTP. Functionally, catalyzes the reversible phosphorylation of UMP to UDP. This chain is Uridylate kinase, found in Chromobacterium violaceum (strain ATCC 12472 / DSM 30191 / JCM 1249 / CCUG 213 / NBRC 12614 / NCIMB 9131 / NCTC 9757 / MK).